Consider the following 335-residue polypeptide: Corrinoid adenosyltransferase PduO (335 aa).

His-206 is a heme binding site.

It belongs to the Cob(I)alamin adenosyltransferase family. PduO subfamily. As to quaternary structure, forms a complex with PduS. The cofactor is heme b. Mg(2+) serves as cofactor.

Its subcellular location is the bacterial microcompartment. It carries out the reaction cob(I)alamin-[corrinoid adenosyltransferase] + ATP = apo-[corrinoid adenosyltransferase] + adenosylcob(III)alamin + triphosphate. It participates in polyol metabolism; 1,2-propanediol degradation. Its pathway is cofactor biosynthesis; adenosylcobalamin biosynthesis. Functionally, converts cob(I)alamin to adenosylcobalamin (adenosylcob(III)alamin), the cofactor for propanediol dehydratase. Found in the bacterial microcompartment (BMC) dedicated to 1,2-propanediol (1,2-PD) degradation. PduS and PduO allow regeneration of the adenosylcobalamin cofactor within the BMC. Expression of a cosmid containing the full 21-gene pdu operon in E.coli allows E.coli to grow on 1,2-propanediol (1,2-PD) with the appearance of bacterial microcompartments (BMC) in its cytoplasm. In terms of biological role, the 1,2-PD-specific bacterial microcompartment (BMC) concentrates low levels of 1,2-PD catabolic enzymes, concentrates volatile reaction intermediates thus enhancing pathway flux and keeps the level of toxic, mutagenic propionaldehyde low. In Citrobacter freundii, this protein is Corrinoid adenosyltransferase PduO.